The following is an 81-amino-acid chain: MNDAFSTAQHRLDALGLRCPEPVMMVRKTVRQMAAGETLLIIADDPATTRDIPSFCEFMDHTLIASETTQTPYQYLIKKGL.

The Cysteine persulfide intermediate role is filled by C19.

It belongs to the sulfur carrier protein TusA family.

The protein resides in the cytoplasm. Its function is as follows. Sulfur carrier protein which probably makes part of a sulfur-relay system. The protein is Sulfur carrier protein TusA of Shewanella baltica (strain OS223).